We begin with the raw amino-acid sequence, 531 residues long: CTP synthase (531 aa).

An amidoligase domain region spans residues 1–267; sequence MTKYIIITGG…ASKILSKLNL (267 aa). A CTP-binding site is contributed by Ser13. Ser13 contributes to the UTP binding site. 14-19 contacts ATP; sequence SVGKGT. Tyr54 contributes to the L-glutamine binding site. Asp71 lines the ATP pocket. 2 residues coordinate Mg(2+): Asp71 and Glu141. Residues 148-150, 188-193, and Lys224 each bind CTP; these read DIE and KTKPLQ. UTP-binding positions include 188-193 and Lys224; that span reads KTKPLQ. The region spanning 292 to 531 is the Glutamine amidotransferase type-1 domain; the sequence is KIALVGKYTK…IGFLRAAAGV (240 aa). Gly355 serves as a coordination point for L-glutamine. Residue Cys382 is the Nucleophile; for glutamine hydrolysis of the active site. L-glutamine is bound by residues 383-386, Glu406, and Arg463; that span reads YGMQ. Catalysis depends on residues His507 and Glu509.

Belongs to the CTP synthase family. As to quaternary structure, homotetramer.

The catalysed reaction is UTP + L-glutamine + ATP + H2O = CTP + L-glutamate + ADP + phosphate + 2 H(+). It catalyses the reaction L-glutamine + H2O = L-glutamate + NH4(+). It carries out the reaction UTP + NH4(+) + ATP = CTP + ADP + phosphate + 2 H(+). It functions in the pathway pyrimidine metabolism; CTP biosynthesis via de novo pathway; CTP from UDP: step 2/2. Its activity is regulated as follows. Allosterically activated by GTP, when glutamine is the substrate; GTP has no effect on the reaction when ammonia is the substrate. The allosteric effector GTP functions by stabilizing the protein conformation that binds the tetrahedral intermediate(s) formed during glutamine hydrolysis. Inhibited by the product CTP, via allosteric rather than competitive inhibition. Catalyzes the ATP-dependent amination of UTP to CTP with either L-glutamine or ammonia as the source of nitrogen. Regulates intracellular CTP levels through interactions with the four ribonucleotide triphosphates. This is CTP synthase from Sulfurisphaera tokodaii (strain DSM 16993 / JCM 10545 / NBRC 100140 / 7) (Sulfolobus tokodaii).